Consider the following 292-residue polypeptide: ATP synthase subunit a (292 aa).

The next 6 membrane-spanning stretches (helical) occupy residues 37–57 (IDSV…FWLC), 96–116 (FIAP…AMDM), 144–164 (VVPT…LVLC), 192–212 (PVFA…EYVA), 230–250 (LVFM…SGVL), and 263–283 (AIFH…LALI).

The protein belongs to the ATPase A chain family. As to quaternary structure, F-type ATPases have 2 components, CF(1) - the catalytic core - and CF(0) - the membrane proton channel. CF(1) has five subunits: alpha(3), beta(3), gamma(1), delta(1), epsilon(1). CF(0) has three main subunits: a(1), b(2) and c(9-12). The alpha and beta chains form an alternating ring which encloses part of the gamma chain. CF(1) is attached to CF(0) by a central stalk formed by the gamma and epsilon chains, while a peripheral stalk is formed by the delta and b chains.

It is found in the cell inner membrane. In terms of biological role, key component of the proton channel; it plays a direct role in the translocation of protons across the membrane. This chain is ATP synthase subunit a, found in Paracidovorax citrulli (strain AAC00-1) (Acidovorax citrulli).